The sequence spans 208 residues: MTRFIMLSFVTGYRKSISCNRFSRNVVSPYFFMRTIIMTRFERNFLINSLMFLETILSVDKKLDDAIHHFTQGQYENPRYQINSRITNADDWSKEDKLKFTSAIAEAIALVSEKYENPTSETTEQIQSARNILLDNYVPLLTANTDPENRLKSVRENSSQIRKELIAKLKDEVPYKSQFENPYVLFPFVAATVAVAATAASVLFGNKP.

The short motif at 77-80 (NPRY) is the NPxY eukaryotic motif element. Residues 184 to 204 (VLFPFVAATVAVAATAASVLF) traverse the membrane as a helical segment.

As to quaternary structure, homotrimer.

Its subcellular location is the secreted. It localises to the host vacuole. The protein localises to the host pathogen-containing vacuole. It is found in the host pathogen-containing vacuole membrane. In terms of biological role, virulence effector that is indispensable for endoplasmic reticulum (ER)-mediated remodeling of the Legionella pneumophila-containing vacuole (LCV) and lysosomal evasion. Essential for intracellular replication in human monocyte-derived macrophages (hMDMs) and amoebae, as well as for intrapulmonary proliferation in mice. In Legionella pneumophila subsp. pneumophila (strain Philadelphia 1 / ATCC 33152 / DSM 7513), this protein is Effector protein MavE.